The chain runs to 254 residues: Phosphoribosylaminoimidazole-succinocarboxamide synthase (254 aa).

This sequence belongs to the SAICAR synthetase family.

The catalysed reaction is 5-amino-1-(5-phospho-D-ribosyl)imidazole-4-carboxylate + L-aspartate + ATP = (2S)-2-[5-amino-1-(5-phospho-beta-D-ribosyl)imidazole-4-carboxamido]succinate + ADP + phosphate + 2 H(+). It functions in the pathway purine metabolism; IMP biosynthesis via de novo pathway; 5-amino-1-(5-phospho-D-ribosyl)imidazole-4-carboxamide from 5-amino-1-(5-phospho-D-ribosyl)imidazole-4-carboxylate: step 1/2. This Bartonella quintana (strain Toulouse) (Rochalimaea quintana) protein is Phosphoribosylaminoimidazole-succinocarboxamide synthase.